Consider the following 221-residue polypeptide: NAD(P)H-hydrate epimerase (221 aa).

In terms of domain architecture, YjeF N-terminal spans 9 to 219 (MRELETAAVK…NIGLPKELLS (211 aa)). (6S)-NADPHX is bound at residue 60 to 64 (GNGGD). K(+) contacts are provided by N61 and D131. (6S)-NADPHX contacts are provided by residues 135-141 (GIGFKGE), Y146, and D164. S167 contributes to the K(+) binding site.

This sequence belongs to the NnrE/AIBP family. K(+) serves as cofactor.

The catalysed reaction is (6R)-NADHX = (6S)-NADHX. It catalyses the reaction (6R)-NADPHX = (6S)-NADPHX. Its function is as follows. Catalyzes the epimerization of the S- and R-forms of NAD(P)HX, a damaged form of NAD(P)H that is a result of enzymatic or heat-dependent hydration. This is a prerequisite for the S-specific NAD(P)H-hydrate dehydratase to allow the repair of both epimers of NAD(P)HX. This chain is NAD(P)H-hydrate epimerase, found in Elusimicrobium minutum (strain Pei191).